The following is a 193-amino-acid chain: UMP-CMP kinase (193 aa).

13-18 (GAGKGT) is an ATP binding site. An NMP region spans residues 33–63 (SAGDLLRDERKKPDSQYGELIESYIRDGKIV). Residues R39, 61–63 (KIV), and 93–96 (GFPR) each bind a ribonucleoside 5'-phosphate. N100 contacts CMP. Residues 133 to 143 (ERGKSSGRSDD) form an LID region. ATP is bound at residue R134. A ribonucleoside 5'-phosphate is bound by residues R140 and R151. Residue K179 coordinates ATP.

Belongs to the adenylate kinase family. UMP-CMP kinase subfamily. In terms of assembly, monomer. Mg(2+) serves as cofactor.

It localises to the nucleus. It is found in the cytoplasm. The enzyme catalyses CMP + ATP = CDP + ADP. It carries out the reaction dCMP + ATP = dCDP + ADP. It catalyses the reaction UMP + ATP = UDP + ADP. The catalysed reaction is a 2'-deoxyribonucleoside 5'-diphosphate + ATP = a 2'-deoxyribonucleoside 5'-triphosphate + ADP. The enzyme catalyses a ribonucleoside 5'-diphosphate + ATP = a ribonucleoside 5'-triphosphate + ADP. Catalyzes the phosphorylation of pyrimidine nucleoside monophosphates at the expense of ATP. Plays an important role in de novo pyrimidine nucleotide biosynthesis. Has preference for UMP and CMP as phosphate acceptors. Also displays broad nucleoside diphosphate kinase activity. This chain is UMP-CMP kinase (cmpk1), found in Xenopus laevis (African clawed frog).